An 85-amino-acid polypeptide reads, in one-letter code: Phycobilisome 9.7 kDa linker polypeptide, phycocyanin-associated, rod (85 aa).

The CpcD-like domain maps to 16-74 (NRVFVYEVEGLRQNEQTDNNRYQIRNSSTIEIQVPYSRMNEEDRRITRLGGRIVNIRPA).

Belongs to the phycobilisome linker protein family.

It localises to the cellular thylakoid membrane. Its function is as follows. Rod linker protein, associated with phycocyanin. Linker polypeptides determine the state of aggregation and the location of the disk-shaped phycobiliprotein units within the phycobilisome and modulate their spectroscopic properties in order to mediate a directed and optimal energy transfer. This Microchaete diplosiphon (Fremyella diplosiphon) protein is Phycobilisome 9.7 kDa linker polypeptide, phycocyanin-associated, rod (cpcD2).